A 159-amino-acid polypeptide reads, in one-letter code: Probable inactive acireductone dioxygenase 1 (159 aa).

This sequence belongs to the acireductone dioxygenase (ARD) family.

The protein localises to the cytoplasm. The protein resides in the nucleus. Its function is as follows. Probable inactive acireductone dioxygenase. This is Probable inactive acireductone dioxygenase 1 from Caenorhabditis elegans.